The primary structure comprises 172 residues: Diphosphoinositol polyphosphate phosphohydrolase 1 (172 aa).

The residue at position 1 (methionine 1) is an N-acetylmethionine. Substrate-binding positions include arginine 10, 18-20 (KKR), and 39-41 (SSR). The 128-residue stretch at 17–144 (YKKRAACLCF…VQASYFETLR (128 aa)) folds into the Nudix hydrolase domain. Mg(2+)-binding residues include glycine 50 and glutamate 66. Residues 51–72 (GGMEPEEEPGTAAVREVCEEAG) carry the Nudix box motif. Residue glutamate 69 is the Proton acceptor of the active site. Glutamate 70 lines the Mg(2+) pocket. Residues 89-91 (RKH), arginine 115, and lysine 133 contribute to the substrate site.

Belongs to the Nudix hydrolase family. DIPP subfamily. As to quaternary structure, monomer. Mg(2+) is required as a cofactor. The cofactor is Mn(2+). Requires Zn(2+) as cofactor.

The protein localises to the cytoplasm. Its subcellular location is the nucleus. The enzyme catalyses diphospho-myo-inositol polyphosphate + H2O = myo-inositol polyphosphate + phosphate.. It carries out the reaction 5-diphospho-1D-myo-inositol 1,2,3,4,6-pentakisphosphate + H2O = 1D-myo-inositol hexakisphosphate + phosphate + H(+). The catalysed reaction is 3,5-bis(diphospho)-1D-myo-inositol 1,2,4,6-tetrakisphosphate + H2O = 3-diphospho-1D-myo-inositol 1,2,4,5,6-pentakisphosphate + phosphate + 2 H(+). It catalyses the reaction [phosphate](n+1) + n H2O = (n+1) phosphate + n H(+). The enzyme catalyses P(1),P(5)-bis(5'-adenosyl) pentaphosphate + H2O = ADP + ATP + 2 H(+). It carries out the reaction P(1),P(6)-bis(5'-adenosyl) hexaphosphate + H2O = 2 ATP + 2 H(+). The catalysed reaction is P(1),P(4)-bis(5'-adenosyl) tetraphosphate + H2O = AMP + ATP + 2 H(+). It catalyses the reaction a 5'-end (N(7)-methyl 5'-triphosphoguanosine)-ribonucleoside in mRNA + H2O = N(7)-methyl-GMP + a 5'-end diphospho-ribonucleoside in mRNA + 2 H(+). The enzyme catalyses a 5'-end (N(7)-methyl 5'-triphosphoguanosine)-ribonucleoside in mRNA + H2O = N(7)-methyl-GDP + a 5'-end phospho-ribonucleoside in mRNA + 2 H(+). Its function is as follows. Cleaves a beta-phosphate from the diphosphate groups in PP-InsP5 (diphosphoinositol pentakisphosphate) and [PP]2-InsP4 (bisdiphosphoinositol tetrakisphosphate), suggesting that it may play a role in signal transduction. InsP6 (inositol hexakisphosphate) is not a substrate. Also able to catalyze the hydrolysis of dinucleoside oligophosphates, with diadenosine 5',5'''-P1,P6-hexaphosphate (Ap6A) and diadenosine 5',5'''- P1,P5-pentaphosphate (Ap5A) being the preferred substrates. The major reaction products are ADP and p4a from Ap6A and ADP and ATP from Ap5A. Also able to hydrolyze 5- phosphoribose 1-diphosphate. Acts as a decapping enzyme that can hydrolyze both monomethylated and unmethylated capped RNAs. Hydrolyzes monomethylated capped RNA after both the alpha- and beta-phosphates generating m7GMP + ppRNA and m7GDP + pRNA. Modulates the stability of a subset of mRNAs implicated in cell motility. Divalent cations zinc, magnesium and manganese determine its substrate specificity. Exhibits diphosphoinositol polyphosphate phosphohydrolase in the presence of magnesium ions, diadenosine hexaphosphate hydrolase activity in the presence of manganese ions and endopolyphosphatase activity in the presence of zinc ions. Plays an important role in limiting DNA damage and maintaining cell survival upon oxidative stress via its endopolyphosphatase activity. The polypeptide is Diphosphoinositol polyphosphate phosphohydrolase 1 (Bos taurus (Bovine)).